We begin with the raw amino-acid sequence, 760 residues long: General transcription and DNA repair factor IIH helicase subunit XPD (760 aa).

Residues 7-283 form the Helicase ATP-binding domain; it reads GLLVYFPYDY…KETDEQRLRE (277 aa). 42–49 serves as a coordination point for ATP; sequence MPSGTGKT. [4Fe-4S] cluster is bound by residues cysteine 116, cysteine 134, cysteine 155, and cysteine 190. The short motif at 234 to 237 is the DEAH box element; it reads DEAH. The interval 438-637 is mediates interaction with MMS19; it reads MDASLAIKPV…TQSRILKARL (200 aa). Positions 682–695 match the Nuclear localization signal motif; that stretch reads KRFARADKRGKLPR.

This sequence belongs to the helicase family. RAD3/XPD subfamily. As to quaternary structure, component of the 7-subunit TFIIH core complex composed of XPB/ERCC3, XPD/ERCC2, GTF2H1, GTF2H2, GTF2H3, GTF2H4 and GTF2H5, which is active in NER. The core complex associates with the 3-subunit CDK-activating kinase (CAK) module composed of CCNH/cyclin H, CDK7 and MNAT1 to form the 10-subunit holoenzyme (holo-TFIIH) active in transcription. The interaction with GTF2H2 results in the stimulation of the 5'--&gt;3' helicase activity. Component of the MMXD complex, which includes CIAO1, ERCC2, CIAO2B, MMS19 and SLC25A5. Interacts with CIAO1 and CIAO2B; the interaction WITH CIAO2B is direct. Interacts with ATF7IP. Interacts directly with MMS19. Part of TBP-based Pol II pre-initiation complex (PIC), in which Pol II core assembles with general transcription factors and other specific initiation factors including GTF2E1, GTF2E2, GTF2F1, GTF2F2, TCEA1, ERCC2, ERCC3, GTF2H2, GTF2H3, GTF2H4, GTF2H5, GTF2A1, GTF2A2, GTF2B and TBP; this large multi-subunit PIC complex mediates DNA unwinding and targets Pol II core to the transcription start site where the first phosphodiester bond forms. Requires Mg(2+) as cofactor. It depends on [4Fe-4S] cluster as a cofactor. ISGylated.

It localises to the nucleus. The protein localises to the cytoplasm. It is found in the cytoskeleton. Its subcellular location is the spindle. The enzyme catalyses Couples ATP hydrolysis with the unwinding of duplex DNA at the replication fork by translocating in the 5'-3' direction. This creates two antiparallel DNA single strands (ssDNA). The leading ssDNA polymer is the template for DNA polymerase III holoenzyme which synthesizes a continuous strand.. The catalysed reaction is ATP + H2O = ADP + phosphate + H(+). Its function is as follows. ATP-dependent 5'-3' DNA helicase, component of the general transcription and DNA repair factor IIH (TFIIH) core complex, which is involved in general and transcription-coupled nucleotide excision repair (NER) of damaged DNA and, when complexed to CDK-activating kinase (CAK), involved in transcription by RNA polymerase II. In NER, TFIIH acts by opening DNA around the lesion to allow the excision of the damaged oligonucleotide and its replacement by a new DNA fragment. The ATP-dependent helicase activity of XPD/ERCC2 is required for DNA opening. In transcription, TFIIH has an essential role in transcription initiation. When the pre-initiation complex (PIC) has been established, TFIIH is required for promoter opening and promoter escape. Phosphorylation of the C-terminal tail (CTD) of the largest subunit of RNA polymerase II by the kinase module CAK controls the initiation of transcription. XPD/ERCC2 acts by forming a bridge between CAK and the core-TFIIH complex. Involved in the regulation of vitamin-D receptor activity. As part of the mitotic spindle-associated MMXD complex it plays a role in chromosome segregation. Might have a role in aging process and could play a causative role in the generation of skin cancers. In Bos taurus (Bovine), this protein is General transcription and DNA repair factor IIH helicase subunit XPD (ERCC2).